Consider the following 395-residue polypeptide: S-adenosylmethionine synthase (395 aa).

His15 contributes to the ATP binding site. Residue Asp17 coordinates Mg(2+). Glu43 is a K(+) binding site. The L-methionine site is built by Glu56 and Gln99. The interval 99–109 (QSADIALGVDE) is flexible loop. ATP-binding positions include 174 to 176 (DGK), 240 to 241 (RF), Asp249, 255 to 256 (RK), Ala272, and Lys276. Asp249 is an L-methionine binding site. Lys280 contributes to the L-methionine binding site.

The protein belongs to the AdoMet synthase family. Homotetramer; dimer of dimers. Mg(2+) is required as a cofactor. It depends on K(+) as a cofactor.

Its subcellular location is the cytoplasm. It carries out the reaction L-methionine + ATP + H2O = S-adenosyl-L-methionine + phosphate + diphosphate. It functions in the pathway amino-acid biosynthesis; S-adenosyl-L-methionine biosynthesis; S-adenosyl-L-methionine from L-methionine: step 1/1. Catalyzes the formation of S-adenosylmethionine (AdoMet) from methionine and ATP. The overall synthetic reaction is composed of two sequential steps, AdoMet formation and the subsequent tripolyphosphate hydrolysis which occurs prior to release of AdoMet from the enzyme. This Alkaliphilus oremlandii (strain OhILAs) (Clostridium oremlandii (strain OhILAs)) protein is S-adenosylmethionine synthase.